Consider the following 80-residue polypeptide: UPF0248 protein YG5714_2801 (80 aa).

The protein belongs to the UPF0248 family.

The sequence is that of UPF0248 protein YG5714_2801 from Saccharolobus islandicus (strain Y.G.57.14 / Yellowstone #1) (Sulfolobus islandicus).